A 1336-amino-acid chain; its full sequence is Glutamate receptor ionotropic, NMDA 2D (1336 aa).

The signal sequence occupies residues 1 to 27 (MRGAGGPRGPRGPAKMLLLLALACASP). Topologically, residues 28–582 (FPEEAPGPGG…SPSAFLEPYS (555 aa)) are extracellular. Asn-92 is a glycosylation site (N-linked (GlcNAc...) asparagine). Cys-104 and Cys-348 are joined by a disulfide. Asn-352, Asn-366, Asn-384, and Asn-467 each carry an N-linked (GlcNAc...) asparagine glycan. Cystine bridges form between Cys-455/Cys-483 and Cys-462/Cys-484. Residues Ser-539, Thr-541, and Arg-546 each coordinate L-glutamate. N-linked (GlcNAc...) asparagine glycosylation is present at Asn-569. Residues 583–604 (PAVWVMMFVMCLTVVAVTVFIF) form a helical membrane-spanning segment. The Cytoplasmic segment spans residues 605–629 (EYLSPVGYNRSLATGKRPGGSTFTI). The discontinuously helical intramembrane region spans 630 to 641 (GKSIWLLWALVF). A pore-forming region spans residues 631–650 (KSIWLLWALVFNNSVPVENP). The Cytoplasmic portion of the chain corresponds to 642 to 653 (NNSVPVENPRGT). The chain crosses the membrane as a helical span at residues 654 to 674 (TSKIMVLVWAFFAVIFLASYT). Residues 675–843 (ANLAAFMIQE…EVMSSKLDID (169 aa)) are Extracellular-facing. L-glutamate contacts are provided by Ser-717, Thr-718, and Asp-759. Cys-773 and Cys-828 are oxidised to a cystine. The helical transmembrane segment at 844–867 (NMAGVFYMLLVAMGLSLLVFAWEH) threads the bilayer. At 868–1336 (LVYWRLRHCL…AHFSSLESEV (469 aa)) the chain is on the cytoplasmic side. Disordered regions lie at residues 900 to 934 (EAAPPPAKPPPPPQPLPSPAYPAPRPAPGPAPFVP), 981 to 1123 (RAAP…SLGG), and 1225 to 1336 (RCGC…ESEV). The span at 902-932 (APPPAKPPPPPQPLPSPAYPAPRPAPGPAPF) shows a compositional bias: pro residues. A compositionally biased stretch (low complexity) spans 981–991 (RAAPRGAAGRP). The segment covering 992 to 1006 (LSPPAAQPPQKPPPS) has biased composition (pro residues). The span at 1035 to 1044 (AAAATAVGPP) shows a compositional bias: low complexity. A compositionally biased stretch (gly residues) spans 1074 to 1089 (PGAGGAGGTGGAGGGA). Over residues 1091–1104 (AAPPPCRAAPPPCP) the composition is skewed to pro residues. Over residues 1225-1240 (RCGCPRSHPHRPRASH) the composition is skewed to basic residues. Arg-1316 carries the post-translational modification Omega-N-methylarginine. At Ser-1326 the chain carries Phosphoserine. The PDZ-binding signature appears at 1334 to 1336 (SEV).

It belongs to the glutamate-gated ion channel (TC 1.A.10.1) family. NR2D/GRIN2D subfamily. As to quaternary structure, heterotetramer. Forms heterotetrameric channels composed of two GluN1/zeta subunits (GRIN1), and two identical GluN2/epsilon subunits (GRIN2A, GRIN2B, GRIN2C or GRIN2D) or GluN3 subunits (GRIN3A or GRIN3B) (in vitro). In vivo, the subunit composition may depend on the expression levels of the different subunits. Interacts with PDZ domains of PATJ and DLG4.

The protein localises to the cell membrane. It localises to the postsynaptic cell membrane. The enzyme catalyses Ca(2+)(in) = Ca(2+)(out). It carries out the reaction Na(+)(in) = Na(+)(out). The catalysed reaction is K(+)(in) = K(+)(out). In terms of biological role, component of N-methyl-D-aspartate (NMDA) receptors (NMDARs) that function as heterotetrameric, ligand-gated cation channels with high calcium permeability and voltage-dependent block by Mg(2+). Participates in synaptic plasticity for learning and memory formation. Channel activation requires binding of the neurotransmitter L-glutamate to the GluN2 subunit, glycine or D-serine binding to the GluN1 subunit, plus membrane depolarization to eliminate channel inhibition by Mg(2+). NMDARs mediate simultaneously the potasium efflux and the influx of calcium and sodium. Each GluN2 subunit confers differential attributes to channel properties, including activation, deactivation and desensitization kinetics, pH sensitivity, Ca2(+) permeability, and binding to allosteric modulators. This chain is Glutamate receptor ionotropic, NMDA 2D, found in Homo sapiens (Human).